Reading from the N-terminus, the 71-residue chain is uncharacterized protein (71 aa).

Positions 1–26 are cleaved as a signal peptide; the sequence is MIKFSVILGMIRCSLTHITTKNTVNA.

This is an uncharacterized protein from Bacillus subtilis (strain 168).